We begin with the raw amino-acid sequence, 201 residues long: Adapter protein MecA 1 (201 aa).

Belongs to the MecA family. As to quaternary structure, homodimer.

Functionally, enables the recognition and targeting of unfolded and aggregated proteins to the ClpC protease or to other proteins involved in proteolysis. Acts negatively in the development of competence by binding ComK and recruiting it to the ClpCP protease. When overexpressed, inhibits sporulation. Also involved in Spx degradation by ClpC. The polypeptide is Adapter protein MecA 1 (mecA1) (Halalkalibacterium halodurans (strain ATCC BAA-125 / DSM 18197 / FERM 7344 / JCM 9153 / C-125) (Bacillus halodurans)).